We begin with the raw amino-acid sequence, 396 residues long: MELDHTPPPSVLNDNCSASYMTPYATVIAMSGLYLLAIFYFCKKSKKMCQPMSDSIYPYQKRLTQLERELKNYLIDEESIEVDDFQIGQTADGFIFRGGVFPKTRNRFNAKVTTAVKISFPIVSKSISLLEDALRLSKLDHPNLIRLLAVSQLSFTVFRPMIALEWLPGGTLADYFQFKVREKDDSERSPIQLKDMLSILYQVSQALKYIHSQLDEFGQELTHGRIFTRNVLVTEPDLRKCEVKLGDFGDAPMGLEYSTPIIAYMPPEILCCAERIPPHRPENDVWMFGVFIWECLTLGAQPHFRKSVEEIKKSFRLPDRGLSCPPTCPLDVWTLVSDCLSEPHMRPRFASTTNASITSRLSELHHIVSPALFLYAIPNQSVCTCIEHHCQSVIHY.

The Extracellular segment spans residues 1–20 (MELDHTPPPSVLNDNCSASY). N-linked (GlcNAc...) asparagine glycosylation occurs at asparagine 15. Residues 21–41 (MTPYATVIAMSGLYLLAIFYF) form a helical membrane-spanning segment. The Cytoplasmic portion of the chain corresponds to 42–396 (CKKSKKMCQP…EHHCQSVIHY (355 aa)). Positions 81-368 (EVDDFQIGQT…SRLSELHHIV (288 aa)) constitute a Protein kinase domain. Residues 87-95 (IGQTADGFI) and lysine 111 each bind ATP.

Belongs to the protein kinase superfamily. Tyr protein kinase family. Expressed in the epidermis of larvae and adults and in vulval and rectal cells.

Its subcellular location is the membrane. Functionally, pseudokinase which plays a role in resistance to fungal infection by promoting expression of antimicrobial peptides (nlp-29, nlp-31, nlp-34, cnc-1, cnc-2 and cnc-4) in the epidermis. In addition, up-regulates nlp-29 expression upon physical wounding and in response to phorbol ester PMA treatment. The sequence is that of Protein nipi-4 from Caenorhabditis elegans.